Consider the following 501-residue polypeptide: Type II methyltransferase M.BsuBI (501 aa).

This sequence belongs to the N(4)/N(6)-methyltransferase family.

It carries out the reaction a 2'-deoxyadenosine in DNA + S-adenosyl-L-methionine = an N(6)-methyl-2'-deoxyadenosine in DNA + S-adenosyl-L-homocysteine + H(+). Its function is as follows. A beta subtype methylase that recognizes the double-stranded sequence 5'-CTGCAG-3', methylates A-5 on both strands, and protects the DNA from cleavage by the BsuBI endonuclease. This chain is Type II methyltransferase M.BsuBI (hsdBM), found in Bacillus subtilis.